We begin with the raw amino-acid sequence, 381 residues long: Peptidoglycan glycosyltransferase MrdB (381 aa).

10 helical membrane-spanning segments follow: residues 11 to 31 (FDLLPFVFIIPLLVVSFLLIF), 40 to 60 (KQGVYYAIGFLLFWVVFFIPF), 66 to 86 (WLFALYWACVILLALVDFMGS), 102 to 122 (ITLQPSEPVKIAILLLLAHLI), 132 to 152 (YDWGMFLKLSFYICLPAALIL), 156 to 176 (DLGTALIVLIMGFGILLIVGL), 180 to 200 (VWLPLLIALIVASPIAYHFLH), 263 to 283 (FGFLGAILLFAIYIGLSLHLF), 297 to 317 (IVALGISILIFVYSSVNIAMT), and 328 to 348 (LPLFSYGGSSFITFMILFAIL).

Belongs to the SEDS family. MrdB/RodA subfamily.

Its subcellular location is the cell inner membrane. The catalysed reaction is [GlcNAc-(1-&gt;4)-Mur2Ac(oyl-L-Ala-gamma-D-Glu-L-Lys-D-Ala-D-Ala)](n)-di-trans,octa-cis-undecaprenyl diphosphate + beta-D-GlcNAc-(1-&gt;4)-Mur2Ac(oyl-L-Ala-gamma-D-Glu-L-Lys-D-Ala-D-Ala)-di-trans,octa-cis-undecaprenyl diphosphate = [GlcNAc-(1-&gt;4)-Mur2Ac(oyl-L-Ala-gamma-D-Glu-L-Lys-D-Ala-D-Ala)](n+1)-di-trans,octa-cis-undecaprenyl diphosphate + di-trans,octa-cis-undecaprenyl diphosphate + H(+). Its pathway is cell wall biogenesis; peptidoglycan biosynthesis. Functionally, peptidoglycan polymerase that is essential for cell wall elongation. The protein is Peptidoglycan glycosyltransferase MrdB of Helicobacter pylori (strain J99 / ATCC 700824) (Campylobacter pylori J99).